Here is a 303-residue protein sequence, read N- to C-terminus: Glyceraldehyde-3-phosphate dehydrogenase (303 aa).

Residues 6–7, aspartate 28, arginine 72, and threonine 114 each bind NAD(+); that span reads RI. D-glyceraldehyde 3-phosphate-binding positions include 143-145, threonine 174, 203-204, and arginine 226; these read SCT and TG. Residue cysteine 144 is the Nucleophile of the active site.

This sequence belongs to the glyceraldehyde-3-phosphate dehydrogenase family. As to quaternary structure, homotetramer.

Its subcellular location is the cytoplasm. It catalyses the reaction D-glyceraldehyde 3-phosphate + phosphate + NAD(+) = (2R)-3-phospho-glyceroyl phosphate + NADH + H(+). The protein operates within carbohydrate degradation; glycolysis; pyruvate from D-glyceraldehyde 3-phosphate: step 1/5. In terms of biological role, catalyzes the oxidative phosphorylation of glyceraldehyde 3-phosphate (G3P) to 1,3-bisphosphoglycerate (BPG) using the cofactor NAD. The first reaction step involves the formation of a hemiacetal intermediate between G3P and a cysteine residue, and this hemiacetal intermediate is then oxidized to a thioester, with concomitant reduction of NAD to NADH. The reduced NADH is then exchanged with the second NAD, and the thioester is attacked by a nucleophilic inorganic phosphate to produce BPG. This Klebsiella pneumoniae protein is Glyceraldehyde-3-phosphate dehydrogenase (gap).